Here is a 336-residue protein sequence, read N- to C-terminus: Glucokinase (336 aa).

12-17 is a binding site for ATP; that stretch reads ADIGGT.

The protein belongs to the bacterial glucokinase family.

The protein resides in the cytoplasm. The catalysed reaction is D-glucose + ATP = D-glucose 6-phosphate + ADP + H(+). The protein is Glucokinase of Helicobacter pylori (strain P12).